Consider the following 421-residue polypeptide: Trimethyllysine dioxygenase, mitochondrial (421 aa).

The N-terminal 15 residues, M1–N15, are a transit peptide targeting the mitochondrion. 2 positions are modified to N6-acetyllysine: K179 and K236. Residues H242, D244, and H389 each coordinate Fe cation.

This sequence belongs to the gamma-BBH/TMLD family. As to quaternary structure, homodimer. Requires Fe(2+) as cofactor. It depends on L-ascorbate as a cofactor.

Its subcellular location is the mitochondrion matrix. It carries out the reaction N(6),N(6),N(6)-trimethyl-L-lysine + 2-oxoglutarate + O2 = (3S)-3-hydroxy-N(6),N(6),N(6)-trimethyl-L-lysine + succinate + CO2. It participates in amine and polyamine biosynthesis; carnitine biosynthesis. Converts trimethyllysine (TML) into hydroxytrimethyllysine (HTML). The chain is Trimethyllysine dioxygenase, mitochondrial (Tmlhe) from Rattus norvegicus (Rat).